The chain runs to 370 residues: Putative F-box/kelch-repeat protein At3g46050 (370 aa).

One can recognise an F-box domain in the interval 15 to 61 (PTSFSSLPDDIVLNCLARVSRFHYPTLSLVCKGFRSLLDSRELHATR). 2 Kelch repeats span residues 119–165 (KIYI…VIND) and 167–212 (IYVI…VPGS).

The protein is Putative F-box/kelch-repeat protein At3g46050 of Arabidopsis thaliana (Mouse-ear cress).